A 556-amino-acid chain; its full sequence is Putative cysteine ligase BshC (556 aa).

Coiled coils occupy residues 408-442 (ILQK…IAQA) and 468-513 (LGQV…ANLT).

It belongs to the BshC family.

Involved in bacillithiol (BSH) biosynthesis. May catalyze the last step of the pathway, the addition of cysteine to glucosamine malate (GlcN-Mal) to generate BSH. The chain is Putative cysteine ligase BshC from Symbiobacterium thermophilum (strain DSM 24528 / JCM 14929 / IAM 14863 / T).